The sequence spans 213 residues: 3-isopropylmalate dehydratase small subunit (213 aa).

It belongs to the LeuD family. LeuD type 1 subfamily. In terms of assembly, heterodimer of LeuC and LeuD.

The catalysed reaction is (2R,3S)-3-isopropylmalate = (2S)-2-isopropylmalate. It functions in the pathway amino-acid biosynthesis; L-leucine biosynthesis; L-leucine from 3-methyl-2-oxobutanoate: step 2/4. Functionally, catalyzes the isomerization between 2-isopropylmalate and 3-isopropylmalate, via the formation of 2-isopropylmaleate. The sequence is that of 3-isopropylmalate dehydratase small subunit from Pseudomonas syringae pv. syringae (strain B728a).